A 244-amino-acid polypeptide reads, in one-letter code: MKIDLNADLGEGFASDSELLTLVSSANIACGFHAGDAQTMLTCVREALKNGVAIGAHPSFPDRDNFGRTAMVLPPETVYAQTLYQIGALGAIVQAQGGVMRHVKPHGMLYNQAAKDPRLAQAIAKAVHDYDSSLILVGLAGSELIRAGERYRLATRQEVFADRGYQADGSLVPRTQPGALILDEGQALAQTLGMVQAGRVKSVTGVWTNVTAQTVCIHGDGEYALAFARRLRAAFNARNIHVSF.

Belongs to the LamB/PxpA family. In terms of assembly, forms a complex composed of PxpA, PxpB and PxpC.

The enzyme catalyses 5-oxo-L-proline + ATP + 2 H2O = L-glutamate + ADP + phosphate + H(+). In terms of biological role, catalyzes the cleavage of 5-oxoproline to form L-glutamate coupled to the hydrolysis of ATP to ADP and inorganic phosphate. The sequence is that of 5-oxoprolinase subunit A from Salmonella arizonae (strain ATCC BAA-731 / CDC346-86 / RSK2980).